We begin with the raw amino-acid sequence, 327 residues long: Protein EMSY-LIKE 1 (327 aa).

The region spanning 1-88 (METQIHQLEQ…HATIQPFDVL (88 aa)) is the ENT domain. Residues 32–58 (ESLITELRKELRVSDDEHRELLSRVNK) adopt a coiled-coil conformation. Disordered regions lie at residues 206–257 (GHGS…SDDI) and 305–327 (ADTSDGEMDGDPPYSHDHPMPQG). The span at 214-232 (GNRRGQIHGGRGRGPRIHQ) shows a compositional bias: basic residues. The stretch at 281–306 (LELDKAKKMLKEHEQALIAAIARLAD) forms a coiled coil. The residue at position 308 (serine 308) is a Phosphoserine. Basic and acidic residues predominate over residues 318–327 (YSHDHPMPQG).

As to quaternary structure, isoform 1 interacts with EDM2 in nucleus.

It localises to the nucleus. Probably involved in the regulation of chromatin states. Contributes to RPP7-mediated and basal immunity, especially against Hyaloperonospora arabidopsidis isolate Hiks1. Regulates negatively EDM2-dependent floral transition. The sequence is that of Protein EMSY-LIKE 1 from Arabidopsis thaliana (Mouse-ear cress).